The chain runs to 115 residues: uncharacterized protein (115 aa).

Belongs to the herpesviridae BLRF2 family.

This is an uncharacterized protein from Saimiriine herpesvirus 2 (strain 11) (SaHV-2).